The following is a 162-amino-acid chain: NADH-quinone oxidoreductase subunit I 1 (162 aa).

4Fe-4S ferredoxin-type domains follow at residues 52–82 (LRRY…IEAG) and 93–122 (VRYD…EGPN). Cysteine 62, cysteine 65, cysteine 68, cysteine 72, cysteine 102, cysteine 105, cysteine 108, and cysteine 112 together coordinate [4Fe-4S] cluster.

Belongs to the complex I 23 kDa subunit family. As to quaternary structure, NDH-1 is composed of 14 different subunits. Subunits NuoA, H, J, K, L, M, N constitute the membrane sector of the complex. [4Fe-4S] cluster serves as cofactor.

The protein localises to the cell inner membrane. It carries out the reaction a quinone + NADH + 5 H(+)(in) = a quinol + NAD(+) + 4 H(+)(out). Functionally, NDH-1 shuttles electrons from NADH, via FMN and iron-sulfur (Fe-S) centers, to quinones in the respiratory chain. The immediate electron acceptor for the enzyme in this species is believed to be ubiquinone. Couples the redox reaction to proton translocation (for every two electrons transferred, four hydrogen ions are translocated across the cytoplasmic membrane), and thus conserves the redox energy in a proton gradient. This Rhodopseudomonas palustris (strain ATCC BAA-98 / CGA009) protein is NADH-quinone oxidoreductase subunit I 1.